The following is a 226-amino-acid chain: tRNA (guanine-N(1)-)-methyltransferase (226 aa).

S-adenosyl-L-methionine is bound by residues glycine 110 and 129–134 (IGDYIL).

The protein belongs to the RNA methyltransferase TrmD family. In terms of assembly, homodimer.

The protein resides in the cytoplasm. It catalyses the reaction guanosine(37) in tRNA + S-adenosyl-L-methionine = N(1)-methylguanosine(37) in tRNA + S-adenosyl-L-homocysteine + H(+). Specifically methylates guanosine-37 in various tRNAs. The chain is tRNA (guanine-N(1)-)-methyltransferase from Malacoplasma penetrans (strain HF-2) (Mycoplasma penetrans).